A 980-amino-acid chain; its full sequence is Chitin binding domain containing chtb-2 (980 aa).

The first 20 residues, 1–20 (MRTMHCFLFILLFCLGQVFT), serve as a signal peptide directing secretion. Asparagine 187 and asparagine 190 each carry an N-linked (GlcNAc...) asparagine glycan. Disordered regions lie at residues 310 to 354 (ERQQ…AELD), 431 to 451 (QEEE…QIRQ), and 486 to 512 (EILR…QQEA). Residues asparagine 941 and asparagine 975 are each glycosylated (N-linked (GlcNAc...) asparagine).

The protein is Chitin binding domain containing chtb-2 of Caenorhabditis elegans.